A 144-amino-acid chain; its full sequence is Large ribosomal subunit protein uL15 (144 aa).

The disordered stretch occupies residues 1–51 (MQLNTLSPAQGEKKSRKRVGRGIGSGIGKTCGSGHKGQKSRSGGFNKIGFE). Residues 21-35 (RGIGSGIGKTCGSGH) are compositionally biased toward gly residues.

Belongs to the universal ribosomal protein uL15 family. In terms of assembly, part of the 50S ribosomal subunit.

Functionally, binds to the 23S rRNA. This Vesicomyosocius okutanii subsp. Calyptogena okutanii (strain HA) protein is Large ribosomal subunit protein uL15.